We begin with the raw amino-acid sequence, 253 residues long: Zinc import ATP-binding protein ZnuC (253 aa).

The region spanning 6 to 227 (VTLNKISVTF…FGNRGAEQLA (222 aa)) is the ABC transporter domain. ATP is bound at residue 38–45 (GPNGAGKS).

The protein belongs to the ABC transporter superfamily. Zinc importer (TC 3.A.1.15.5) family. The complex is composed of two ATP-binding proteins (ZnuC), two transmembrane proteins (ZnuB) and a solute-binding protein (ZnuA).

The protein resides in the cell inner membrane. It catalyses the reaction Zn(2+)(out) + ATP(in) + H2O(in) = Zn(2+)(in) + ADP(in) + phosphate(in) + H(+)(in). Its function is as follows. Part of the ABC transporter complex ZnuABC involved in zinc import. Responsible for energy coupling to the transport system. The sequence is that of Zinc import ATP-binding protein ZnuC from Yersinia pestis bv. Antiqua (strain Antiqua).